A 2591-amino-acid polypeptide reads, in one-letter code: Eukaryotic translation initiation factor 2-alpha kinase PK4 (2591 aa).

At 1 to 16 the chain is on the cytoplasmic side; that stretch reads MYNKGINICLNEDNKC. A helical membrane pass occupies residues 17–37; sequence IILLHIIFNKCIVSFVASHIL. Over 38–1488 the chain is Lumenal; sequence VEGKICFLNR…EFSSQKHKKS (1451 aa). Residues 1028-1048 are disordered; the sequence is KKKRNSKKGENRNKKRKTQKR. Residues 1489–1509 form a helical membrane-spanning segment; sequence WYWNIFYAITLVIVIPFIFIY. Over 1510–2591 the chain is Cytoplasmic; the sequence is RLFKKQTNNK…NIINGNEVDH (1082 aa). Positions 1781–1840 are disordered; it reads NLNSADEENKSPYAKKYSDEKKNRSKSSKYIENTQSNNNDNTNGNMNVGNHINNDKMNNK. The span at 1813 to 1832 shows a compositional bias: low complexity; that stretch reads NTQSNNNDNTNGNMNVGNHI. Residues 1880-1888 and Lys-1905 each bind ATP; that span reads IGQGGFGSV. Disordered regions lie at residues 2123–2157 and 2183–2212; these read DNDE…GGDI and IKNT…TNNN. Positions 2134-2143 are enriched in basic and acidic residues; sequence KKNDNDERKS. The 352-residue stretch at 2181 to 2532 folds into the Protein kinase domain; it reads MTIKNTQGTS…KIKVLLDPHL (352 aa). Asp-2369 serves as the catalytic Proton acceptor. Thr-2436 is subject to Phosphothreonine; by autocatalysis. A compositionally biased stretch (polar residues) spans 2558–2574; it reads STNPNGDIKENVNQNNL. Residues 2558–2591 are disordered; that stretch reads STNPNGDIKENVNQNNLVDDKGNNNIINGNEVDH. Low complexity predominate over residues 2580-2591; the sequence is NNNIINGNEVDH.

It belongs to the protein kinase superfamily. Ser/Thr protein kinase family. GCN2 subfamily. May form oligomers in response to stress; oligomerization may result in catalytic activity. Interacts with BIP; the interaction is disrupted in response to stress.

It localises to the endoplasmic reticulum membrane. It carries out the reaction L-seryl-[protein] + ATP = O-phospho-L-seryl-[protein] + ADP + H(+). The catalysed reaction is L-threonyl-[protein] + ATP = O-phospho-L-threonyl-[protein] + ADP + H(+). Its activity is regulated as follows. Dissociation from BIP and oligomerization, may results autophosphorylation and kinase activity induction. Its function is as follows. During the asexual blood stage, phosphorylates translation factor eIF2alpha in late schizonts resulting in protein translation inhibition. Plays a role in trophozoite differentiation into schizonts. The sequence is that of Eukaryotic translation initiation factor 2-alpha kinase PK4 from Plasmodium berghei (strain Anka).